Here is a 635-residue protein sequence, read N- to C-terminus: DNA mismatch repair protein MutL (635 aa).

Positions 359–399 are disordered; sequence GTNKYAQPEAAKSSAAEQAVARERSSARERAAPAYKEDHPY. The span at 364-377 shows a compositional bias: low complexity; it reads AQPEAAKSSAAEQA. Positions 378–399 are enriched in basic and acidic residues; it reads VARERSSARERAAPAYKEDHPY.

Belongs to the DNA mismatch repair MutL/HexB family.

Functionally, this protein is involved in the repair of mismatches in DNA. It is required for dam-dependent methyl-directed DNA mismatch repair. May act as a 'molecular matchmaker', a protein that promotes the formation of a stable complex between two or more DNA-binding proteins in an ATP-dependent manner without itself being part of a final effector complex. The sequence is that of DNA mismatch repair protein MutL from Yersinia pseudotuberculosis serotype O:1b (strain IP 31758).